Here is a 573-residue protein sequence, read N- to C-terminus: CTP synthase (573 aa).

The interval 1 to 281 (MGQTRIQART…DAYVVRRLGL (281 aa)) is amidoligase domain. Serine 23 contributes to the CTP binding site. Serine 23 is a UTP binding site. ATP is bound by residues 24-29 (SLGKGL) and aspartate 81. Mg(2+) is bound by residues aspartate 81 and glutamate 155. CTP contacts are provided by residues 162–164 (DIE), 202–207 (KTKPTQ), and lysine 238. Residues 202 to 207 (KTKPTQ) and lysine 238 each bind UTP. In terms of domain architecture, Glutamine amidotransferase type-1 spans 306 to 554 (EVALVGKYVD…IAAALKYKLA (249 aa)). Glycine 369 lines the L-glutamine pocket. The active-site Nucleophile; for glutamine hydrolysis is cysteine 396. L-glutamine-binding positions include 397–400 (LGLQ), glutamate 419, and arginine 480. Residues histidine 527 and glutamate 529 contribute to the active site.

It belongs to the CTP synthase family. Homotetramer.

The catalysed reaction is UTP + L-glutamine + ATP + H2O = CTP + L-glutamate + ADP + phosphate + 2 H(+). It carries out the reaction L-glutamine + H2O = L-glutamate + NH4(+). The enzyme catalyses UTP + NH4(+) + ATP = CTP + ADP + phosphate + 2 H(+). The protein operates within pyrimidine metabolism; CTP biosynthesis via de novo pathway; CTP from UDP: step 2/2. Allosterically activated by GTP, when glutamine is the substrate; GTP has no effect on the reaction when ammonia is the substrate. The allosteric effector GTP functions by stabilizing the protein conformation that binds the tetrahedral intermediate(s) formed during glutamine hydrolysis. Inhibited by the product CTP, via allosteric rather than competitive inhibition. In terms of biological role, catalyzes the ATP-dependent amination of UTP to CTP with either L-glutamine or ammonia as the source of nitrogen. Regulates intracellular CTP levels through interactions with the four ribonucleotide triphosphates. The sequence is that of CTP synthase from Nocardia farcinica (strain IFM 10152).